Reading from the N-terminus, the 595-residue chain is Adenine deaminase 2 (595 aa).

Belongs to the metallo-dependent hydrolases superfamily. Adenine deaminase family. Requires Mn(2+) as cofactor.

It carries out the reaction adenine + H2O + H(+) = hypoxanthine + NH4(+). The protein is Adenine deaminase 2 of Rhizobium johnstonii (strain DSM 114642 / LMG 32736 / 3841) (Rhizobium leguminosarum bv. viciae).